Here is a 960-residue protein sequence, read N- to C-terminus: MVSVKPLPDIDSNEGETDADVYEVEDILADRVNKNGINEYYIKWAGYDWYDNTWEPEQNLFGAEKVLKKWKKRKKLIAKGLLEPFDAEDNEAKKMKREKEILRQQRQKRKSELTQLSQKVKEKFKKMRKKPARRIVTIANDEEEEDDQTMDEDAFERKSMQGELKERNLTDKTSTLSTSFGETSPDVNPFYLSEWPTVTDSILLSKSLSSDAIPLKNGEIKSTMLMPSDSDNSVPGIQNSNNLENTGAFVENANSPQSNTPLSTFRHSSPLSLSPVITSDNDVANSLFFSNSTPLPSSLKIKKEAPKLETHTILVSDNSGSLTKQDILSYFAFIKGNIEVFFLKSPKKDKVCNMAYIQFDSIEQAKLAYDKGHPSWHVTLVKGKISTDMEECKVSKSILKTTPSKKANARSVSFTQTTTDTLSESEKFASNVDLDENFDFNVNVTNEDAKQLKKSVIGSSWTTVNNDWNSVSKSDQTFENDGASKVVPAGNITLNSDNSLHHSISESEDLSSASTLSDYFRFVLRVGKSLYYAGELSFDISKLKAETEHQQLLRSLVSCKQVDVLRFVTSQYLEVFGTCLTKVLSGSLCIRSDVDMTHFKNILNRGNGAGIVLGSNYTLLLFTEDNNALMNLYDCQGQSNSPFWMVIFEPLESILVEWSAKNLRPKKPYHKSQSYLSYLLQLGHIDLHKIGAFQATQILIVSKQPSPEAEELEDTFREAAIPTFRGLEIPESLFLSQNVFVFLNVSLEDDFDQLQFLTLAKRKSCKFFLFGLSLPLKSPNDSHVGTDFKKNNEPLDKLTYSQYLRPMFPKGGVVSVTLSALIKTPRLLELISPFLEIKKDSWILILPPSIVDMVKSYFVTNNPDKSLLEIQNLLNTLQRYLTNPALKNVTLYQDWDIVIDDSADVSLASTLQLYQKKNYDKYRRFVLIHELKNELTPVNGLDIVDYDEFKETFMRAIGLK.

The region spanning 22–74 (YEVEDILADRVNKNGINEYYIKWAGYDWYDNTWEPEQNLFGAEKVLKKWKKRK) is the Chromo domain.

As to quaternary structure, ago1, chp1 and tas3 interact to form the core of the RNA-induced transcriptional silencing (RITS) complex. The RITS complex interacts with the RDRC complex via interaction between ago1 and hrr1. Clr4 has a role in mediating this interaction. Interacts with dri1.

The protein resides in the nucleus. The protein localises to the cytoplasm. Its subcellular location is the cytoskeleton. It localises to the microtubule organizing center. It is found in the spindle pole body. Component of the kinetochore which plays a role in stabilizing microtubules and so allowing accurate chromosome segregation. Has a role in the RNA interference (RNAi) pathway which is important for heterochromatin formation and accurate chromosome segregation. A member of the RNA-induced transcriptional silencing (RITS) complex which is involved in the biosynthesis of dsRNA from primer siRNAs provided by the RNA-directed RNA polymerase (RDRC) complex. The chain is Chromo domain-containing protein 1 from Schizosaccharomyces pombe (strain 972 / ATCC 24843) (Fission yeast).